The primary structure comprises 2968 residues: MDGRDFGPQRSVHGPPPPLLSGLAMDSHRVGAATAGRLPASGLPGPLPPGKYMAGLNLHPHPGEAFLGSFVASGMGPSASSHGSPVPLPSDLSFRSPTPSNLPMVQLWAAHAHEGFSHLPSGLYPSYLHLNHLEPPSSGSPLLSQLGQPSIFDTQKGQGPGGDGFYLPTAGAPGSLHSHAPSARTPGGGHSSGAPAKGSSSRDGPAKERAGRGGEPPPLFGKKDPRARGEEASGPRGVVDLTQEARAEGRQDRGPPRLAERLSPFLAESKTKNAALQPSVLTMCNGGAGDVGLPALVAEAGRGGAKEAARQDEGARLLRRTETLLPGPRPCPSPLPPPPAPPKGPPAPPAATPAGVYTVFREQGREHRVVAPTFVPSVEAFDERPGPIQIASQARDARAREREAGRPGVLQAPPGSPRPLDRPEGLREKNSVIRSLKRPPPADAPTVRATRASPDPRAYVPAKELLKPEADPRPCERAPRGPAGPAAQQAAKLFGLEPGRPPPTGPEHKWKPFELGNFAATQMAVLAAQHHHSRAEEEAAVVAASSSKKAYLDPGAVLPRSAATCGRPVADMHSAAHGSGEASAMQSLIKYSGSFARDAVAVRPGGCGKKSPFGGLGTMKPEPAPTSAGASRAQARLPHSGGPAAGGGRQLKRDPERPESAKAFGREGSGAQGEAEVRHPPVGIAVAVARQKDSGGSGRLGPGLVDQERSLSLSNVKGHGRADEDCVDDRARHREERLLGARLDRDQEKLLRESKELADLARLHPTSCAPNGLNPNLMVTGGPALAGSGRWSADPAAHLATHPWLPRSGNASMWLAGHPYGLGPPSLHQGMAPAFPPGLGGSLPSAYQFVRDPQSGQLVVIPSDHLPHFAELMERATVPPLWPALYPPGRSPLHHAQQLQLFSQQHFLRQQEFLYLQQQAAQALELQRSAQLVQERLKAQEHRAEMEEKGSKRGLEAAGKAGLATAGPGLLPRKPPGLAAGPAGTYGKAVSPPPSPRASPVAALKAKVIQKLEDVSKPPAYAYPATPSSHPTSPPPASPPPTPGITRKEEAPENVVEKKDLELEKEAPSPFQALFSDIPPRYPFQALPPHYGRPYPFLLQPTAAADADGLAPDVPLPADGPERLALSPEDKPIRLSPSKITEPLREGPEEEPLAEREVKAEVEDMDEGPTELPPLESPLPLPAAEAMATPSPAGGCGGGLLEAQALSATGQSCAEPSECPDFVEGPEPRVDSPGRTEPCTAALDLGVQLTPETLVEAKEEPVEVPVAVPVVEAVPEEGLAQVAPSESQPTLEMSDCDVPAGEGQCPSLEPQEAVPVLGSTCFLEEASSDQFLPSLEDPLAGMNALAAAAELPQARPLPSPGAAGAQALEKLEAAESLVLEQSFLHGITLLSEIAELELERRSQEMGGAERALVARPSLESLLAAGSHMLREVLDGPVVDPLKNLRLPRELKPNKKYSWMRKKEERMYAMKSSLEDMDALELDFRMRLAEVQRQYKEKQRELVKLQRRRDSEDRREEPHRSLARRGPGRPRKRTHAPSALSPPRKRGKSGHSSGKLSSKSLLTSDDYELGAGIRKRHKGSEEEHDALIGMGKARGRNQTWDEHEASSDFISQLKIKKKKMASDQEQLASKLDKALSLTKQDKLKSPFKFSDSAGGKSKTSGGCGRYLTPYDSLLGKNRKALAKGLGLSLKSSREGKHKRAAKTRKMEVGFKARGQPKSAHSPFASEVSSYSYNTDSEEDEEFLKDEWPAQGPSSSKLTPSLLCSMVAKNSKAAGGPKLTKRGLAAPRTLKPKPATSRKQPFCLLLREAEARSSFSDSSEESFDQDESSEEEDEEEELEEEDEASGGGYRLGARERALSPGLEESGLGLLARFAASALPSPTVGPSLSVVQLEAKQKARKKEERQSLLGTEFEYTDSESEVKVRKRSPAGLLRPKKGLGEPGPSLAAPTPGARGPDPSSPDKAKLAVEKGRKARKLRGPKEPGFEAGPEASDDDLWTRRRSERIFLHDASAAAPAPVSTAPATKTSRCAKGGPLSPRKDAGRAKDRKDPRKKKKGKEAGPGAGLPPPRAPALPSEARAPHASSLTAAKRSKAKAKGKEVKKENRGKGGAVSKLMESMAAEEDFEPNQDSSFSEDEHLPRGGAVERPLTPAPRSCIIDKDELKDGLRVLIPMDDKLLYAGHVQTVHSPDIYRVVVEGERGNRPHIYCLEQLLQEAIIDVRPASTRFLPQGTRIAAYWSQQYRCLYPGTVVRGLLDLEDDGDLITVEFDDGDTGRIPLSHIRLLPPDYKIQCAEPSPALLVPSAKRRSRKTSKDTGEGKDGGTAGSEEPGAKARGRGRKPSAKAKGDRAATLEEGNPTDEVPSTPLALEPSSTPGSKKSPPEPVDKRAKAPKARPAPPQPSPAPPAFTSCPAPEPFAELPAPATSLAPAPLITMPATRPKPKKARAAEESGAKGPRRPGEEAELLVKLDHEGVTSPKSKKAKEALLLREDPGAGGWQEPKSLLSLGSYPPAAGSSEPKAPWPKATDGDLAQEPGPGLTFEDSGNPKSPDKAQAEQDGAEESESSSSSSSGSSSSSSSSSSSGSETEGEEEGDKNGDGGCGTGGRNCSAASSRAASPASSSSSSSSSSSSSSSSSSSSSSSSSSSSSSSSSSSSSSSSSSSSSSSSSSSSSSSSSSTTDEDSSCSSDDEAAPAPTAGPSAQAALPTKATKQAGKARPSAHSPGKKTPAPQPQAPPPQPTQPLQPKAQAGAKSRPKKREGVHLPTTKELAKRQRLPSVENRPKIAAFLPARQLWKWFGKPTQRRGMKGKARKLFYKAIVRGKEMIRIGDCAVFLSAGRPNLPYIGRIQSMWESWGNNMVVRVKWFYHPEETSPGKQFHQGQHWDQKSSRSLPAALRVSSQRKDFMERALYQSSHVDENDVQTVSHKCLVVGLEQYEQMLKTKKYQDSEGLYYLAGTYEPTTGMIFSTDGVPVLC.

Disordered stretches follow at residues 1–24 (MDGRDFGPQRSVHGPPPPLLSGLA) and 139–261 (GSPL…LAER). The span at 139–150 (GSPLLSQLGQPS) shows a compositional bias: low complexity. Composition is skewed to basic and acidic residues over residues 221–233 (GKKDPRARGEEAS) and 243–260 (QEARAEGRQDRGPPRLAE). Phosphoserine is present on serine 263. Over residues 304–322 (GAKEAARQDEGARLLRRTE) the composition is skewed to basic and acidic residues. Disordered stretches follow at residues 304-356 (GAKE…PAGV) and 381-488 (FDER…PAAQ). The span at 327–351 (GPRPCPSPLPPPPAPPKGPPAPPAA) shows a compositional bias: pro residues. 3 stretches are compositionally biased toward basic and acidic residues: residues 395–405 (RDARAREREAG), 419–431 (PLDRPEGLREKNS), and 464–479 (ELLKPEADPRPCERAP). At serine 611 the chain carries Phosphoserine. 8 disordered regions span residues 612–679 (PFGG…EVRH), 941–1002 (EHRA…SPVA), 1019–1055 (PAYAYPATPSSHPTSPPPASPPPTPGITRKEEAPENV), 1106–1190 (DADG…MATP), 1212–1236 (SCAEPSECPDFVEGPEPRVDSPGRT), 1279–1306 (LAQVAPSESQPTLEMSDCDVPAGEGQCP), 1497–1566 (KQRE…SDDY), and 1687–1855 (SLKS…RERA). Lysine 620 participates in a covalent cross-link: Glycyl lysine isopeptide (Lys-Gly) (interchain with G-Cter in SUMO2). Basic and acidic residues-rich tracts occupy residues 651 to 660 (LKRDPERPES) and 941 to 955 (EHRAEMEEKGSKRGL). Residues 916–949 (LQQQAAQALELQRSAQLVQERLKAQEHRAEMEEK) adopt a coiled-coil conformation. Composition is skewed to low complexity over residues 966–983 (AGPGLLPRKPPGLAAGPA) and 1019–1031 (PAYAYPATPSSHP). Positions 1032 to 1043 (TSPPPASPPPTP) are enriched in pro residues. Residues 1046–1055 (TRKEEAPENV) are compositionally biased toward basic and acidic residues. 2 positions are modified to phosphoserine: serine 1127 and serine 1136. Over residues 1142–1162 (EPLREGPEEEPLAEREVKAEV) the composition is skewed to basic and acidic residues. Residues 1171 to 1181 (ELPPLESPLPL) show a composition bias toward pro residues. Residues 1481-1516 (LDFRMRLAEVQRQYKEKQRELVKLQRRRDSEDRREE) are a coiled coil. Residues 1497–1519 (KQRELVKLQRRRDSEDRREEPHR) show a composition bias toward basic and acidic residues. Over residues 1520 to 1534 (SLARRGPGRPRKRTH) the composition is skewed to basic residues. Serine 1540 is subject to Phosphoserine. Residues 1549-1563 (GHSSGKLSSKSLLTS) show a composition bias toward low complexity. A compositionally biased stretch (acidic residues) spans 1816-1842 (SSEESFDQDESSEEEDEEEELEEEDEA). Phosphoserine is present on residues serine 1857 and serine 1863. 2 disordered regions span residues 1912-2148 (YTDS…LTPA) and 2295-2771 (LLVP…RLPS). Composition is skewed to basic and acidic residues over residues 1957 to 1968 (SPDKAKLAVEKG) and 1993 to 2004 (LWTRRRSERIFL). Low complexity predominate over residues 2007–2024 (ASAAAPAPVSTAPATKTS). The span at 2034–2046 (PRKDAGRAKDRKD) shows a compositional bias: basic and acidic residues. Residues 2069–2085 (ALPSEARAPHASSLTAA) are compositionally biased toward low complexity. A compositionally biased stretch (basic and acidic residues) spans 2093–2103 (KGKEVKKENRG). Threonine 2146 bears the Phosphothreonine mark. Over residues 2307–2316 (TSKDTGEGKD) the composition is skewed to basic and acidic residues. Over residues 2329-2338 (ARGRGRKPSA) the composition is skewed to basic residues. Residues 2365–2374 (EPSSTPGSKK) are compositionally biased toward low complexity. A compositionally biased stretch (basic and acidic residues) spans 2375 to 2384 (SPPEPVDKRA). Positions 2390 to 2401 (RPAPPQPSPAPP) are enriched in pro residues. Residues 2411–2433 (PFAELPAPATSLAPAPLITMPAT) show a composition bias toward low complexity. Composition is skewed to basic and acidic residues over residues 2441–2468 (RAAEESGAKGPRRPGEEAELLVKLDHEG) and 2477–2487 (AKEALLLREDP). Low complexity-rich tracts occupy residues 2559–2580 (SSSSSSSGSSSSSSSSSSSGSE) and 2603–2671 (SAAS…SSSS). Acidic residues predominate over residues 2673–2685 (TDEDSSCSSDDEA). Residues 2723-2736 (APQPQAPPPQPTQP) are compositionally biased toward pro residues. Serine 2771 bears the Phosphoserine mark. The region spanning 2817-2962 (EMIRIGDCAV…PTTGMIFSTD (146 aa)) is the BAH domain.

The sequence is that of Trinucleotide repeat-containing gene 18 protein from Homo sapiens (Human).